Consider the following 448-residue polypeptide: Methylenetetrahydrofolate--tRNA-(uracil-5-)-methyltransferase TrmFO (448 aa).

Residue 13-18 (GAGLAG) coordinates FAD.

Belongs to the MnmG family. TrmFO subfamily. It depends on FAD as a cofactor.

It is found in the cytoplasm. The catalysed reaction is uridine(54) in tRNA + (6R)-5,10-methylene-5,6,7,8-tetrahydrofolate + NADH + H(+) = 5-methyluridine(54) in tRNA + (6S)-5,6,7,8-tetrahydrofolate + NAD(+). It catalyses the reaction uridine(54) in tRNA + (6R)-5,10-methylene-5,6,7,8-tetrahydrofolate + NADPH + H(+) = 5-methyluridine(54) in tRNA + (6S)-5,6,7,8-tetrahydrofolate + NADP(+). Functionally, catalyzes the folate-dependent formation of 5-methyl-uridine at position 54 (M-5-U54) in all tRNAs. This is Methylenetetrahydrofolate--tRNA-(uracil-5-)-methyltransferase TrmFO from Streptococcus pyogenes serotype M12 (strain MGAS2096).